Reading from the N-terminus, the 493-residue chain is Cobyric acid synthase (493 aa).

Residues 246 to 440 (PIDIAVIKMP…IHGVFDGVVF (195 aa)) enclose the GATase cobBQ-type domain. Cysteine 326 acts as the Nucleophile in catalysis. Histidine 432 is an active-site residue.

The protein belongs to the CobB/CobQ family. CobQ subfamily.

The protein operates within cofactor biosynthesis; adenosylcobalamin biosynthesis. Functionally, catalyzes amidations at positions B, D, E, and G on adenosylcobyrinic A,C-diamide. NH(2) groups are provided by glutamine, and one molecule of ATP is hydrogenolyzed for each amidation. The protein is Cobyric acid synthase of Clostridium botulinum (strain ATCC 19397 / Type A).